The following is a 654-amino-acid chain: Transcription factor E2-alpha (654 aa).

The short motif at 19 to 27 is the 9aaTAD element; the sequence is LLDFSMMFP. The tract at residues 31 to 103 is disordered; that stretch reads TNGKGRPASL…LGPGLGGKSG (73 aa). Low complexity predominate over residues 55–68; sequence SSGSWGSGDQSSSS. Positions 69-79 are enriched in polar residues; that stretch reads FDPSRTFSEGT. The span at 84 to 94 shows a compositional bias: low complexity; sequence SHSSLSSSTFL. Ser134 and Ser139 each carry phosphoserine. Disordered stretches follow at residues 135 to 205, 239 to 268, 292 to 329, and 343 to 385; these read PGPL…SAKT, MLGG…FGGL, SFSS…GSSG, and DHSS…YDGG. The segment covering 147-156 has biased composition (low complexity); sequence SQYYPSYSGS. Residues 170-176 carry the Nuclear localization signal motif; that stretch reads PKKVRKV. Residues 256–268 show a composition bias toward low complexity; sequence VGSSGSSSTFGGL. Over residues 343–354 the composition is skewed to low complexity; the sequence is DHSSNNFSSSPS. A Phosphothreonine modification is found at Thr355. The residue at position 359 (Ser359) is a Phosphoserine. Arg371 carries the post-translational modification Omega-N-methylarginine. A Phosphoserine modification is found at Ser379. Residues 389–425 form a leucine-zipper region; sequence LQSKIEDHLDEAIHVLRSHAVGTAGDMHTLLPGHGAL. The tract at residues 461-552 is disordered; the sequence is NHAALPSQPG…KAEREKERRV (92 aa). Lys498 participates in a covalent cross-link: Glycyl lysine isopeptide (Lys-Gly) (interchain with G-Cter in SUMO2). Residues 512 to 523 show a composition bias toward basic and acidic residues; it reads DHSEEEKKELKA. Ser529 is subject to Phosphoserine. The residue at position 531 (Asp531) is a Phosphothreonine. The span at 542 to 552 shows a compositional bias: basic and acidic residues; the sequence is QKAEREKERRV. In terms of domain architecture, bHLH spans 549-602; the sequence is ERRVANNARERLRVRDINEAFKELGRMCQLHLNSEKPQTKLLILHQAVSVILNL. Lys625 is covalently cross-linked (Glycyl lysine isopeptide (Lys-Gly) (interchain with G-Cter in SUMO2)). A disordered region spans residues 633–654; sequence PQMVLSAPHPGLSEAHNPAGHM.

In terms of assembly, homodimer. Heterodimer; efficient DNA binding requires dimerization with another bHLH protein. Forms a heterodimer with ASH1, TWIST1 and TWIST2. Forms a heterodimer with MYOG; heterodimerization enhances MYOG DNA-binding and transcriptional activities. Forms a heterodimer with NEUROD1; the heterodimer is inhibited in presence of ID2, but not NR0B2, to E-box element. Forms a heterodimer with TCF15; the heterodimer binds E-box element. Forms a heterodimer with ATOH8; repress transcription of TCF3 and TCF3/NEUROG3 dimer-induced transactivation of E box-dependent promoters. Component of a nuclear TAL-1 complex composed at least of CBFA2T3, LDB1, TAL1 and TCF3. Interacts with NEUROD2, PTF1A and TGFB1I1. Interacts with EP300 and UBE2I. Interacts with BHLHA9. Interacts with ASB2; the interaction is mediated by SKP2 and targets TCF3 for Notch-induced proteasomal degradation. Forms a heterodimer with ATOH7; required for ATOH7 DNA-binding. As to quaternary structure, interacts with RALGAPA1 and FIGLA. In terms of processing, phosphorylated following NGF stimulation. Post-translationally, undergoes Notch-induced ubiquitination and subsequent proteasomal degradation which is mediated by ASB1 or ASB2, the substrate-recognition components of probable ECS E3 ubiquitin-protein ligase complexes.

It is found in the nucleus. Transcriptional regulator involved in the initiation of neuronal differentiation and mesenchymal to epithelial transition. Heterodimers between TCF3 and tissue-specific basic helix-loop-helix (bHLH) proteins play major roles in determining tissue-specific cell fate during embryogenesis, like muscle or early B-cell differentiation. Together with TCF15, required for the mesenchymal to epithelial transition. Dimers bind DNA on E-box motifs: 5'-CANNTG-3'. Binds to the kappa-E2 site in the kappa immunoglobulin gene enhancer. Binds to IEB1 and IEB2, which are short DNA sequences in the insulin gene transcription control region. Functionally, facilitates ATOH7 binding to DNA at the consensus sequence 5'-CAGGTG-3', and positively regulates transcriptional activity. The chain is Transcription factor E2-alpha (TCF3) from Homo sapiens (Human).